A 220-amino-acid polypeptide reads, in one-letter code: MGWLFGAPRLVEEKDALKGGPHPVLPNPQPHAVLGTLRGQPGTETIYIGIGCYWGAEKLFWETPGVVYTSVGFAGGITPNPTYRETCTGRTNHTEIVEVVYDPTQVTFDELVVKAMEAHDPTQGYRQGNDTGTQYRSAIYTAGPNAEQQAQRAREIVEHYAPKLAAAGLGRITTEILPLASTPAGEYYMAEDEHQQYLHKNPLGYCPHHSTGVACGIPEA.

The active site involves Cys52.

The protein belongs to the MsrA Met sulfoxide reductase family.

It carries out the reaction L-methionyl-[protein] + [thioredoxin]-disulfide + H2O = L-methionyl-(S)-S-oxide-[protein] + [thioredoxin]-dithiol. The enzyme catalyses [thioredoxin]-disulfide + L-methionine + H2O = L-methionine (S)-S-oxide + [thioredoxin]-dithiol. Functionally, has an important function as a repair enzyme for proteins that have been inactivated by oxidation. Catalyzes the reversible oxidation-reduction of methionine sulfoxide in proteins to methionine. The protein is Peptide methionine sulfoxide reductase MsrA of Corynebacterium diphtheriae (strain ATCC 700971 / NCTC 13129 / Biotype gravis).